An 833-amino-acid chain; its full sequence is Glycerol-3-phosphate acyltransferase (833 aa).

The short motif at 310–315 (HRSHID) is the HXXXXD motif element.

Belongs to the GPAT/DAPAT family.

Its subcellular location is the cell inner membrane. It catalyses the reaction sn-glycerol 3-phosphate + an acyl-CoA = a 1-acyl-sn-glycero-3-phosphate + CoA. It functions in the pathway phospholipid metabolism; CDP-diacylglycerol biosynthesis; CDP-diacylglycerol from sn-glycerol 3-phosphate: step 1/3. In Pseudomonas syringae pv. tomato (strain ATCC BAA-871 / DC3000), this protein is Glycerol-3-phosphate acyltransferase.